Consider the following 1194-residue polypeptide: Pre-mRNA-processing ATP-dependent RNA helicase prp-5 (1194 aa).

Disordered regions lie at residues 1–201 (MARL…KEAK), 224–248 (AVVG…ASPA), and 452–484 (ASGE…DDYG). Composition is skewed to basic and acidic residues over residues 21–37 (RKDD…GPVD) and 44–154 (SPID…RDQP). Polar residues predominate over residues 156–176 (PGNTTAKENEPAKSTPTQPQT). Residues 177–186 (EAEKKAERLR) show a composition bias toward basic and acidic residues. Low complexity predominate over residues 232–248 (SPAPASPAAAESPASPA). Over residues 455–469 (EESHSKADTLTEKKN) the composition is skewed to basic and acidic residues. The Q motif motif lies at 561–589 (QKWSQCGLTRPILDTIESLGFEKPTPIQM). In terms of domain architecture, Helicase ATP-binding spans 592-770 (LPVIMSGRDV…KKVLRDPVEI (179 aa)). 605–612 (AKTGSGKT) contributes to the ATP binding site. The short motif at 718-721 (DEAD) is the DEAD box element. The 149-residue stretch at 797-945 (RLLELLGELY…PVPDRLNEMR (149 aa)) folds into the Helicase C-terminal domain. Disordered regions lie at residues 952–1011 (VKAG…DKTK) and 1025–1056 (DASK…SGGA). Basic and acidic residues-rich tracts occupy residues 967-980 (GLEK…AARM), 997-1011 (EDAP…DKTK), and 1025-1036 (DASKAETEDKHA).

It belongs to the DEAD box helicase family. DDX46/PRP5 subfamily.

It is found in the nucleus. The enzyme catalyses ATP + H2O = ADP + phosphate + H(+). ATP-dependent RNA helicase involved spliceosome assembly and in nuclear splicing. Catalyzes an ATP-dependent conformational change of U2 snRNP. Bridges U1 and U2 snRNPs and enables stable U2 snRNP association with intron RNA. The protein is Pre-mRNA-processing ATP-dependent RNA helicase prp-5 (prp-5) of Neurospora crassa (strain ATCC 24698 / 74-OR23-1A / CBS 708.71 / DSM 1257 / FGSC 987).